The primary structure comprises 393 residues: 2-methylcitrate synthase (393 aa).

Arg92 and His207 together coordinate substrate. His242 is a catalytic residue. A CoA-binding site is contributed by 275 to 279 (KIMGF). Residue His281 is part of the active site. Arg290 provides a ligand contact to substrate. Residue Asp332 is part of the active site. Positions 357 and 376 each coordinate substrate.

The protein belongs to the citrate synthase family. As to quaternary structure, homodimer.

The catalysed reaction is propanoyl-CoA + oxaloacetate + H2O = (2S,3S)-2-methylcitrate + CoA + H(+). It carries out the reaction oxaloacetate + acetyl-CoA + H2O = citrate + CoA + H(+). It functions in the pathway organic acid metabolism; propanoate degradation. Its pathway is carbohydrate metabolism; tricarboxylic acid cycle; isocitrate from oxaloacetate: step 1/2. Involved in the catabolism of short chain fatty acids (SCFA) via the tricarboxylic acid (TCA)(acetyl degradation route) and via the 2-methylcitrate cycle I (propionate degradation route). Catalyzes the Claisen condensation of propionyl-CoA and oxaloacetate (OAA) to yield 2-methylcitrate (2-MC) and CoA. Also catalyzes the condensation of oxaloacetate with acetyl-CoA. The sequence is that of 2-methylcitrate synthase (gltA1) from Mycobacterium tuberculosis (strain ATCC 35801 / TMC 107 / Erdman).